Reading from the N-terminus, the 147-residue chain is Large ribosomal subunit protein uL15 (147 aa).

Residues 16–63 (SSRARVGRGIGSGLGKTAGRGHKGSFARKGGGKIKPGFEGGQTPMQRR) form a disordered region. A compositionally biased stretch (gly residues) spans 23–33 (RGIGSGLGKTA). Residues 34-47 (GRGHKGSFARKGGG) show a composition bias toward basic residues.

It belongs to the universal ribosomal protein uL15 family. Part of the 50S ribosomal subunit.

Functionally, binds to the 23S rRNA. The sequence is that of Large ribosomal subunit protein uL15 from Xylella fastidiosa (strain Temecula1 / ATCC 700964).